Consider the following 182-residue polypeptide: Unknown protein 1 (182 aa).

This chain is Unknown protein 1, found in Helianthus annuus (Common sunflower).